The sequence spans 494 residues: Anthranilate synthase component 1 (494 aa).

Residues Ser50 and 276 to 278 each bind L-tryptophan; that span reads PYM. 311-312 contacts chorismate; that stretch reads GT. Glu338 is a binding site for Mg(2+). Residues Tyr426, Arg446, 460–462, and Gly462 each bind chorismate; that span reads GAG. Glu475 is a Mg(2+) binding site.

Belongs to the anthranilate synthase component I family. Heterotetramer consisting of two non-identical subunits: a beta subunit (TrpG) and a large alpha subunit (TrpE). Mg(2+) serves as cofactor.

It catalyses the reaction chorismate + L-glutamine = anthranilate + pyruvate + L-glutamate + H(+). It functions in the pathway amino-acid biosynthesis; L-tryptophan biosynthesis; L-tryptophan from chorismate: step 1/5. Feedback inhibited by tryptophan. Part of a heterotetrameric complex that catalyzes the two-step biosynthesis of anthranilate, an intermediate in the biosynthesis of L-tryptophan. In the first step, the glutamine-binding beta subunit (TrpG) of anthranilate synthase (AS) provides the glutamine amidotransferase activity which generates ammonia as a substrate that, along with chorismate, is used in the second step, catalyzed by the large alpha subunit of AS (TrpE) to produce anthranilate. In the absence of TrpG, TrpE can synthesize anthranilate directly from chorismate and high concentrations of ammonia. This Acetivibrio thermocellus (Hungateiclostridium thermocellum) protein is Anthranilate synthase component 1 (trpE).